The sequence spans 199 residues: 7-methyl-GTP pyrophosphatase (199 aa).

Residue aspartate 76 is the Proton acceptor of the active site.

Belongs to the Maf family. YceF subfamily. A divalent metal cation is required as a cofactor.

It localises to the cytoplasm. It carries out the reaction N(7)-methyl-GTP + H2O = N(7)-methyl-GMP + diphosphate + H(+). Functionally, nucleoside triphosphate pyrophosphatase that hydrolyzes 7-methyl-GTP (m(7)GTP). May have a dual role in cell division arrest and in preventing the incorporation of modified nucleotides into cellular nucleic acids. The protein is 7-methyl-GTP pyrophosphatase of Rhizobium meliloti (strain 1021) (Ensifer meliloti).